A 163-amino-acid polypeptide reads, in one-letter code: MLRQLRLTMDISGWIFLPWRRSMSNMKDSPPPPPPLASTFDDVIVDYEDPDYLPLPEYPVRPNEPLETRKQRLLYQSRKRGMLENDLLLSTFAAKHLQNFSAEQTAQYDQLINGVSNDWDIYYWATEVKPTPKEYDTEIMGLLKEHVKNAERVTRLRQPDLNA.

A mitochondrion-targeting transit peptide spans 1–23 (MLRQLRLTMDISGWIFLPWRRSM).

This sequence belongs to the SDHAF2 family. Interacts with the flavoprotein subunit within the SDH catalytic dimer.

It localises to the mitochondrion matrix. Its function is as follows. Plays an essential role in the assembly of succinate dehydrogenase (SDH), an enzyme complex (also referred to as respiratory complex II) that is a component of both the tricarboxylic acid (TCA) cycle and the mitochondrial electron transport chain, and which couples the oxidation of succinate to fumarate with the reduction of ubiquinone (coenzyme Q) to ubiquinol. Required for flavinylation (covalent attachment of FAD) of the flavoprotein subunit of the SDH catalytic dimer. The chain is Succinate dehydrogenase assembly factor 2-A, mitochondrial from Drosophila sechellia (Fruit fly).